The chain runs to 293 residues: Large ribosomal subunit protein uL4 (293 aa).

Basic and acidic residues-rich tracts occupy residues 1-14 and 33-55; these read MAEE…EKTP and KTTE…ESTK. Disordered regions lie at residues 1–72 and 130–166; these read MAEE…IKSE and QRQG…STRS.

The protein belongs to the universal ribosomal protein uL4 family. In terms of assembly, part of the 50S ribosomal subunit.

Functionally, one of the primary rRNA binding proteins, this protein initially binds near the 5'-end of the 23S rRNA. It is important during the early stages of 50S assembly. It makes multiple contacts with different domains of the 23S rRNA in the assembled 50S subunit and ribosome. In terms of biological role, forms part of the polypeptide exit tunnel. The sequence is that of Large ribosomal subunit protein uL4 from Mycoplasma mobile (strain ATCC 43663 / 163K / NCTC 11711) (Mesomycoplasma mobile).